Here is a 184-residue protein sequence, read N- to C-terminus: C-phycoerythrin class 1 subunit beta (184 aa).

Residues C50 and C61 each coordinate (2R,3E)-phycoerythrobilin. N72 is modified (N4-methylasparagine). Residues C82 and C165 each coordinate (2R,3E)-phycoerythrobilin.

The protein belongs to the phycobiliprotein family. Heterodimer of an alpha and a beta chain. Contains three covalently linked bilin chromophores.

It is found in the cellular thylakoid membrane. Functionally, light-harvesting photosynthetic bile pigment-protein from the phycobiliprotein complex. The sequence is that of C-phycoerythrin class 1 subunit beta (cpeB) from Synechococcus sp. (strain WH7803).